The primary structure comprises 271 residues: Tryptophan synthase alpha chain (271 aa).

Active-site proton acceptor residues include glutamate 53 and aspartate 64.

It belongs to the TrpA family. As to quaternary structure, tetramer of two alpha and two beta chains.

It carries out the reaction (1S,2R)-1-C-(indol-3-yl)glycerol 3-phosphate + L-serine = D-glyceraldehyde 3-phosphate + L-tryptophan + H2O. The protein operates within amino-acid biosynthesis; L-tryptophan biosynthesis; L-tryptophan from chorismate: step 5/5. The alpha subunit is responsible for the aldol cleavage of indoleglycerol phosphate to indole and glyceraldehyde 3-phosphate. This chain is Tryptophan synthase alpha chain, found in Streptomyces coelicolor (strain ATCC BAA-471 / A3(2) / M145).